A 98-amino-acid polypeptide reads, in one-letter code: NADH-ubiquinone oxidoreductase chain 4L (98 aa).

The next 3 membrane-spanning stretches (helical) occupy residues 1–21 (MSMV…GLLM), 29–49 (SLLC…VTIL), and 61–81 (IILL…LVMV).

This sequence belongs to the complex I subunit 4L family. Core subunit of respiratory chain NADH dehydrogenase (Complex I) which is composed of 45 different subunits.

It is found in the mitochondrion inner membrane. It catalyses the reaction a ubiquinone + NADH + 5 H(+)(in) = a ubiquinol + NAD(+) + 4 H(+)(out). Functionally, core subunit of the mitochondrial membrane respiratory chain NADH dehydrogenase (Complex I) which catalyzes electron transfer from NADH through the respiratory chain, using ubiquinone as an electron acceptor. Part of the enzyme membrane arm which is embedded in the lipid bilayer and involved in proton translocation. This chain is NADH-ubiquinone oxidoreductase chain 4L (MT-ND4L), found in Pusa hispida (Ringed seal).